Here is a 196-residue protein sequence, read N- to C-terminus: Large ribosomal subunit protein bL25 (196 aa).

Belongs to the bacterial ribosomal protein bL25 family. CTC subfamily. Part of the 50S ribosomal subunit; part of the 5S rRNA/L5/L18/L25 subcomplex. Contacts the 5S rRNA. Binds to the 5S rRNA independently of L5 and L18.

This is one of the proteins that binds to the 5S RNA in the ribosome where it forms part of the central protuberance. The sequence is that of Large ribosomal subunit protein bL25 from Treponema pallidum subsp. pallidum (strain SS14).